Consider the following 342-residue polypeptide: Manganese-dependent ADP-ribose/CDP-alcohol diphosphatase (342 aa).

Met1 is modified (N-acetylmethionine). Asp25, Gln27, Asp74, Asn110, His241, His278, and His280 together coordinate Zn(2+).

This sequence belongs to the ADPRibase-Mn family. As to quaternary structure, monomer. It depends on Mg(2+) as a cofactor.

It catalyses the reaction CDP-choline + H2O = phosphocholine + CMP + 2 H(+). The enzyme catalyses ADP-D-ribose + H2O = D-ribose 5-phosphate + AMP + 2 H(+). It carries out the reaction CDP-glycerol + H2O = sn-glycerol 3-phosphate + CMP + 2 H(+). Hydrolyzes ADP-ribose, IDP-ribose, CDP-glycerol, CDP-choline and CDP-ethanolamine, but not other non-reducing ADP-sugars or CDP-glucose. May be involved in immune cell signaling as suggested by the second-messenger role of ADP-ribose, which activates TRPM2 as a mediator of oxidative/nitrosative stress. This chain is Manganese-dependent ADP-ribose/CDP-alcohol diphosphatase (ADPRM), found in Homo sapiens (Human).